The sequence spans 103 residues: ATP-dependent Clp protease adapter protein ClpS 2 (103 aa).

Belongs to the ClpS family. Binds to the N-terminal domain of the chaperone ClpA.

In terms of biological role, involved in the modulation of the specificity of the ClpAP-mediated ATP-dependent protein degradation. The polypeptide is ATP-dependent Clp protease adapter protein ClpS 2 (Agrobacterium fabrum (strain C58 / ATCC 33970) (Agrobacterium tumefaciens (strain C58))).